Here is a 137-residue protein sequence, read N- to C-terminus: Nucleoside diphosphate kinase (137 aa).

Residues lysine 9, phenylalanine 57, arginine 85, threonine 91, arginine 102, and asparagine 112 each coordinate ATP. Histidine 115 (pros-phosphohistidine intermediate) is an active-site residue.

This sequence belongs to the NDK family. Homotetramer. Mg(2+) is required as a cofactor.

It localises to the cytoplasm. It carries out the reaction a 2'-deoxyribonucleoside 5'-diphosphate + ATP = a 2'-deoxyribonucleoside 5'-triphosphate + ADP. It catalyses the reaction a ribonucleoside 5'-diphosphate + ATP = a ribonucleoside 5'-triphosphate + ADP. Functionally, major role in the synthesis of nucleoside triphosphates other than ATP. The ATP gamma phosphate is transferred to the NDP beta phosphate via a ping-pong mechanism, using a phosphorylated active-site intermediate. The sequence is that of Nucleoside diphosphate kinase from Leptospira borgpetersenii serovar Hardjo-bovis (strain L550).